We begin with the raw amino-acid sequence, 520 residues long: Probable methylmalonate-semialdehyde/malonate-semialdehyde dehydrogenase [acylating], mitochondrial (520 aa).

6 residues coordinate NAD(+): A169, F171, K195, E198, R199, and S248. The Nucleophile role is filled by C303. E403 contacts NAD(+).

Belongs to the aldehyde dehydrogenase family. Homotetramer.

It localises to the mitochondrion. The enzyme catalyses 2-methyl-3-oxopropanoate + NAD(+) + CoA + H2O = propanoyl-CoA + hydrogencarbonate + NADH + H(+). It carries out the reaction 3-oxopropanoate + NAD(+) + CoA + H2O = hydrogencarbonate + acetyl-CoA + NADH + H(+). Functionally, probable malonate and methylmalonate semialdehyde dehydrogenase involved in the catabolism of valine, thymine, and compounds catabolized by way of beta-alanine, including uracil and cytidine. This is Probable methylmalonate-semialdehyde/malonate-semialdehyde dehydrogenase [acylating], mitochondrial from Drosophila pseudoobscura pseudoobscura (Fruit fly).